An 84-amino-acid polypeptide reads, in one-letter code: MPVKQQIGIVISNKMQKTIVVKIENRYPHPMYSKTLIKTKKYLAHDELGECNIGDQVLVEECRPLSKRKRWKLIKILSKSSLIN.

Belongs to the universal ribosomal protein uS17 family. As to quaternary structure, part of the 30S ribosomal subunit.

The protein resides in the plastid. It localises to the chloroplast. Its function is as follows. One of the primary rRNA binding proteins, it binds specifically to the 5'-end of 16S ribosomal RNA. The sequence is that of Small ribosomal subunit protein uS17c (rps17) from Phaeodactylum tricornutum (strain CCAP 1055/1).